Here is a 204-residue protein sequence, read N- to C-terminus: NADH-quinone oxidoreductase subunit C (204 aa).

The protein belongs to the complex I 30 kDa subunit family. As to quaternary structure, NDH-1 is composed of 14 different subunits. Subunits NuoB, C, D, E, F, and G constitute the peripheral sector of the complex.

It localises to the cell inner membrane. It carries out the reaction a quinone + NADH + 5 H(+)(in) = a quinol + NAD(+) + 4 H(+)(out). In terms of biological role, NDH-1 shuttles electrons from NADH, via FMN and iron-sulfur (Fe-S) centers, to quinones in the respiratory chain. The immediate electron acceptor for the enzyme in this species is believed to be ubiquinone. Couples the redox reaction to proton translocation (for every two electrons transferred, four hydrogen ions are translocated across the cytoplasmic membrane), and thus conserves the redox energy in a proton gradient. The sequence is that of NADH-quinone oxidoreductase subunit C from Polaromonas naphthalenivorans (strain CJ2).